The following is a 47-amino-acid chain: Potassium channel toxin gamma-KTx 5.1 (47 aa).

4 disulfides stabilise this stretch: Cys5-Cys23, Cys11-Cys34, Cys20-Cys39, and Cys24-Cys41.

This sequence belongs to the ergtoxin family. Gamma-KTx 5 subfamily. Expressed by the venom gland.

It is found in the secreted. Its function is as follows. Reversibly blocks Kv11/ERG potassium channels. This chain is Potassium channel toxin gamma-KTx 5.1, found in Centruroides sculpturatus (Arizona bark scorpion).